The primary structure comprises 164 residues: N5-carboxyaminoimidazole ribonucleotide mutase (164 aa).

The substrate site is built by Ser-13, Asp-16, and Arg-43.

Belongs to the AIR carboxylase family. Class I subfamily.

It catalyses the reaction 5-carboxyamino-1-(5-phospho-D-ribosyl)imidazole + H(+) = 5-amino-1-(5-phospho-D-ribosyl)imidazole-4-carboxylate. Its pathway is purine metabolism; IMP biosynthesis via de novo pathway; 5-amino-1-(5-phospho-D-ribosyl)imidazole-4-carboxylate from 5-amino-1-(5-phospho-D-ribosyl)imidazole (N5-CAIR route): step 2/2. In terms of biological role, catalyzes the conversion of N5-carboxyaminoimidazole ribonucleotide (N5-CAIR) to 4-carboxy-5-aminoimidazole ribonucleotide (CAIR). The protein is N5-carboxyaminoimidazole ribonucleotide mutase of Haemophilus influenzae (strain ATCC 51907 / DSM 11121 / KW20 / Rd).